A 3942-amino-acid chain; its full sequence is Protein bassoon (3942 aa).

A disordered region spans residues 1 to 158 (MGNEASLEGG…PTSPYSVPQI (158 aa)). Gly-2 is lipidated: N-myristoyl glycine. Residues 9–29 (GGAGEGPLPPGGSGLGPGPGA) are compositionally biased toward gly residues. Positions 31–52 (KPPSALAGGGQLPVAGAARAAG) are enriched in low complexity. Pro residues predominate over residues 53 to 71 (PPTPGLGPVPGPGPGPGPG). A 5 X 2 AA tandem repeats of P-G region spans residues 62-71 (PGPGPGPGPG). 2 stretches are compositionally biased toward polar residues: residues 85-98 (SQRTTSPTPKQASA) and 127-154 (QVDSRTQRSGRSPSVSPDRGSTPTSPYS). Position 142 is a phosphoserine (Ser-142). Arg-145 is modified (omega-N-methylarginine). 2 C4-type zinc fingers span residues 167 to 190 (CPICKTSDLTSTPSQPNFNTCTQC) and 195 to 217 (CNQCGFNPNPHLTQVKEWLCLNC). 2 disordered regions span residues 228-341 (TTAP…EQTQ) and 362-457 (LMSV…KTMP). The segment covering 230-240 (APRSKSQQQLH) has biased composition (polar residues). A phosphoserine mark is found at Ser-241 and Ser-245. Positions 362-379 (LMSVQPEADTQGQPSPSK) are enriched in polar residues. Residues 395–407 (PRPPGSGPGPGPT) show a composition bias toward pro residues. 2 C4-type zinc fingers span residues 464 to 487 (CPLCQAELNMGSRGPANYNTCTAC) and 492 to 514 (CNLCGFNPTPHLVEKTEWLCLNC). Disordered regions lie at residues 525–937 (GEPA…LQGG), 950–1258 (GSYG…VAES), 1309–1553 (MDPM…WQQS), and 1573–1625 (RMVH…PSAG). The span at 528–541 (APLPLPTPQQPPAG) shows a compositional bias: pro residues. 5 repeat units span residues 570–576 (KASPQAT), 577–583 (KASPQAT), 584–590 (KASPQAT), 591–597 (KASPQTT), and 598–604 (KASPQAK). A 5 X 7 AA tandem repeats of K-A-S-P-Q-[AT]-[AT] region spans residues 570–604 (KASPQATKASPQATKASPQATKASPQTTKASPQAK). Residues 573 to 600 (PQATKASPQATKASPQATKASPQTTKAS) are compositionally biased toward polar residues. Pro residues predominate over residues 632–645 (VPKPPPETTVPPGT). Residues 684 to 693 (QDLSRSPQSL) show a composition bias toward polar residues. The segment covering 694–708 (SDTGYSSDGVSSSQS) has biased composition (low complexity). Over residues 709 to 718 (EITGVVQQEV) the composition is skewed to polar residues. 2 stretches are compositionally biased toward acidic residues: residues 787–802 (FDSDEELGDILEEDDS) and 865–876 (SAEEDNLEEDDT). The residue at position 881 (Arg-881) is an Omega-N-methylarginine. A compositionally biased stretch (basic and acidic residues) spans 895-905 (PRPESSQEPKR). Residue Ser-980 is modified to Phosphoserine. Low complexity predominate over residues 994 to 1011 (PASTPSYTSGTSPTSLSS). Positions 1049–1062 (DSSEEEELREEEEL) are enriched in acidic residues. Ser-1050 and Ser-1051 each carry phosphoserine. Residues 1063-1076 (LREQEKMREVEQQR) show a composition bias toward basic and acidic residues. A Phosphoserine modification is found at Ser-1100. Thr-1102 is modified (phosphothreonine). Residues Ser-1108 and Ser-1114 each carry the phosphoserine modification. Positions 1117–1132 (EELRQAAEMEELHRSS) are enriched in basic and acidic residues. 2 stretches are compositionally biased toward low complexity: residues 1133–1143 (CSEYSPSPSLD) and 1173–1190 (SPTETPSGSSTTPSSGRP). Over residues 1192–1207 (KSAEEAYEDMMRKAEM) the composition is skewed to basic and acidic residues. Positions 1209–1219 (QRQQGQVAGAR) are enriched in low complexity. Residues 1226–1240 (SQPTGPRSQGSFEYQ) show a composition bias toward polar residues. Ser-1236 is subject to Phosphoserine. Residues 1333-1343 (SFSTSTSSDSS) show a composition bias toward low complexity. O-linked (GlcNAc) threonine glycosylation is present at Thr-1354. Positions 1357–1366 (FAKEPQDPLK) are enriched in basic and acidic residues. Polar residues predominate over residues 1370 to 1438 (SPVSSTLTSK…TTANYGSQTE (69 aa)). Thr-1395 carries O-linked (GlcNAc) threonine glycosylation. A phosphoserine mark is found at Ser-1482, Ser-1491, and Ser-1493. Low complexity predominate over residues 1488-1498 (STPSESPTFSP). 2 stretches are compositionally biased toward polar residues: residues 1508-1522 (EFSTQTPSLTLSSDI) and 1573-1609 (RMVHASASTSPLCSPTDSQPTSHSYSQTTPPSASQMP). The O-linked (GlcNAc) serine glycan is linked to Ser-1707. Arg-1792 and Arg-1796 each carry omega-N-methylarginine. At Arg-1806 the chain carries Asymmetric dimethylarginine; alternate. Position 1806 is an omega-N-methylarginine; alternate (Arg-1806). The residue at position 1818 (Arg-1818) is an Omega-N-methylarginine. Disordered stretches follow at residues 1831–1865 (GVGLKPGPVPEPGAEPHRATPAELRSHAPPGTRKP) and 1926–1977 (PSAP…QRPY). Basic and acidic residues predominate over residues 1844 to 1856 (AEPHRATPAELRS). The O-linked (GlcNAc) threonine glycan is linked to Thr-1934. Ser-1990 and Ser-2046 each carry phosphoserine. Omega-N-methylarginine is present on residues Arg-2051 and Arg-2081. An asymmetric dimethylarginine mark is found at Arg-2255, Arg-2265, and Arg-2270. O-linked (GlcNAc) threonine glycosylation occurs at Thr-2318. Disordered stretches follow at residues 2327–2378 (PVAP…KQQE), 2476–2504 (EQKQRQKAPFPATCEAPSRGPPPAATELA), and 2524–2663 (TEGP…STTA). Residues 2329 to 2342 (APAPGPAPAPPPGQ) show a composition bias toward pro residues. Positions 2361 to 2378 (ASEKEEASQEDRQRKQQE) are enriched in basic and acidic residues. 2 coiled-coil regions span residues 2366–2422 (EASQ…LVQR) and 2453–2483 (LAQQRLQLEQIQQLQQQLQLQLEEQKQRQKA). An O-linked (GlcNAc) threonine glycan is attached at Thr-2524. Over residues 2541–2551 (SSASDMSLQTE) the composition is skewed to polar residues. Residue Ser-2578 is modified to Phosphoserine. A phosphothreonine mark is found at Thr-2595 and Thr-2622. Positions 2643-2655 (RHSDSGSDSKHDA) are enriched in basic and acidic residues. O-linked (GlcNAc) threonine glycosylation occurs at Thr-2700. Positions 2730–3278 (EPDGQAQGVA…GGVSGRPGKD (549 aa)) are interaction with DAO. A phosphoserine mark is found at Ser-2811, Ser-2860, and Ser-2866. A disordered region spans residues 2854 to 2874 (TLQRSLSDPKPLSPTAEESAK). An O-linked (GlcNAc) threonine glycan is attached at Thr-2945. Phosphoserine is present on Ser-3022. 3 disordered regions span residues 3051-3409 (PATP…LTSR), 3431-3560 (YYGV…PRAH), and 3581-3917 (EAYH…KILP). The segment covering 3073 to 3083 (TAGSSGPTQNG) has biased composition (polar residues). The segment covering 3089 to 3114 (APTYTGPSTYPAPTYPPGTGYPAEPG) has biased composition (low complexity). Basic and acidic residues predominate over residues 3202–3211 (KAPEHPRGSD). A compositionally biased stretch (polar residues) spans 3212 to 3237 (RSSVSQSPAPTYPSDSHYTSLEQNVP). Ser-3301 is modified (phosphoserine). 2 stretches are compositionally biased toward basic and acidic residues: residues 3330–3342 (GDSDYRHGARADK) and 3372–3391 (QGMEQKISKFSPIEEAKDVE). Position 3382 is a phosphoserine (Ser-3382). Positions 3447-3461 (YGSSSRSRMASAYSG) are enriched in low complexity. A compositionally biased stretch (basic and acidic residues) spans 3464 to 3487 (LSSHDYSSRGKGYERERDTAERLQ). Arg-3502 carries the post-translational modification Omega-N-methylarginine. A compositionally biased stretch (low complexity) spans 3520 to 3534 (PLGRPRPAGGALPPG). Composition is skewed to basic and acidic residues over residues 3549 to 3560 (VQEHVKDGPRAH) and 3592 to 3602 (WFDKPRDARSD). Basic residues predominate over residues 3652–3665 (EHRHHSDHGRHSGR). A compositionally biased stretch (basic and acidic residues) spans 3666-3690 (HAGEEPGRRAAKPHARDMGRHEARP). Residues 3750–3820 (TQAQPQMQGR…QARLQPQSQP (71 aa)) show a composition bias toward low complexity. Omega-N-methylarginine is present on Arg-3823. Over residues 3835-3851 (KPQPGPTTAPGPQPAGP) the composition is skewed to pro residues. Over residues 3856 to 3891 (QASSSKPPAAKAPQQGRAPQAQTTPGPGPAGAKPGA) the composition is skewed to low complexity.

As to quaternary structure, interacts with PCLO, ERC2/CAST1, RIMS1 and UNC13A. Interacts with TPRG1L. Interacts with DYNLL1 and DYNLL2; these interactions potentially link PTVs to dynein and myosin V motor complexes. Interacts with ATG5; this interaction is important for the regulation of presynaptic autophagy. Interacts (via C-terminus) with TRIO (via N-terminus). Interacts with CTBP1. Interacts with SIAH1; this interaction negatively regulates SIAH1 E3 ligase activity. Interacts (via coiled region) with DAO; the interaction is direct. Myristoylated. The N-terminal myristoylation is not sufficient for presynaptic localization. Expressed in brain and retina.

Its subcellular location is the cytoplasm. The protein resides in the presynaptic active zone. The protein localises to the cytoskeleton. It localises to the cytoplasmic vesicle. It is found in the secretory vesicle. Its subcellular location is the synaptic vesicle membrane. In terms of biological role, scaffold protein of the presynaptic cytomatrix at the active zone (CAZ) which is the place in the synapse where neurotransmitter is released. After synthesis, participates in the formation of Golgi-derived membranous organelles termed Piccolo-Bassoon transport vesicles (PTVs) that are transported along axons to sites of nascent synaptic contacts. At the presynaptic active zone, regulates the spatial organization of synaptic vesicle cluster, the protein complexes that execute membrane fusion and compensatory endocytosis. Also functions in processes other than assembly such as the regulation of specific presynaptic protein ubiquitination by interacting with SIAH1 or the regulation of presynaptic autophagy by associating with ATG5. Also mediates synapse to nucleus communication leading to reconfiguration of gene expression by associating with the transcriptional corepressor CTBP1 and by subsequently reducing the size of its pool available for nuclear import. Inhibits the activity of the proportion of DAO enzyme that localizes to the presynaptic active zone, which may modulate synaptic transmission. The chain is Protein bassoon from Mus musculus (Mouse).